A 363-amino-acid polypeptide reads, in one-letter code: MIIDTTEVQAINSFSRSESLKEGYGLIGMLVPIFTPVSGITIGVLVIVWLEREISAGIQQRIGPEYAGPLGILQALADGTKLLFKEDLLPSRGDIRLFSIGPSIAVISILLSYSVIPFGYRLVLADLSIGVFLWIAISSIAPIGLLMSGYGSNNKYSFSGGLRAAAQSISYEIPLTPCVLSISLLSNSSSTIDIVEAQSKYGFWGWNLWRQPIGFIVFIISSLAECERLPFDLPEAEEELVAGYQTEYSGIKFGLFYVASYLNLLVSSLFVTVLYLGGWNLSIPYIFIPELFGINKTGGVFGTTIGILITLAKAYLFLFIPITTRWTLPRMRMDQLLNLGWKFLLPISLGNLLLTTSSQLLSL.

6 helical membrane passes run 30–50, 98–118, 127–147, 248–268, 300–320, and 336–356; these read LVPI…IVWL, FSIG…VIPF, LSIG…GLLM, YSGI…LVSS, VFGT…FLFI, and LLNL…LLTT.

Belongs to the complex I subunit 1 family. In terms of assembly, NDH is composed of at least 16 different subunits, 5 of which are encoded in the nucleus.

It localises to the plastid. Its subcellular location is the chloroplast thylakoid membrane. It catalyses the reaction a plastoquinone + NADH + (n+1) H(+)(in) = a plastoquinol + NAD(+) + n H(+)(out). It carries out the reaction a plastoquinone + NADPH + (n+1) H(+)(in) = a plastoquinol + NADP(+) + n H(+)(out). Functionally, NDH shuttles electrons from NAD(P)H:plastoquinone, via FMN and iron-sulfur (Fe-S) centers, to quinones in the photosynthetic chain and possibly in a chloroplast respiratory chain. The immediate electron acceptor for the enzyme in this species is believed to be plastoquinone. Couples the redox reaction to proton translocation, and thus conserves the redox energy in a proton gradient. The chain is NAD(P)H-quinone oxidoreductase subunit 1, chloroplastic from Drimys granadensis.